Here is a 151-residue protein sequence, read N- to C-terminus: S-protein homolog 27 (151 aa).

2 N-linked (GlcNAc...) asparagine glycosylation sites follow: asparagine 91 and asparagine 123.

The protein belongs to the plant self-incompatibility (S1) protein family.

It localises to the secreted. The protein is S-protein homolog 27 of Arabidopsis thaliana (Mouse-ear cress).